A 101-amino-acid polypeptide reads, in one-letter code: MAKTSAVEKNKRRRKSVAQQATKRAALKAIVMNQSLPIEDRFKATLKLASLPRDGSKTRIRNRCEVTGRPRAFYRKLKMSRIALRELGNSGKVPGIVKSSW.

Residues 1–21 (MAKTSAVEKNKRRRKSVAQQA) are disordered.

It belongs to the universal ribosomal protein uS14 family. As to quaternary structure, part of the 30S ribosomal subunit. Contacts proteins S3 and S10.

Its function is as follows. Binds 16S rRNA, required for the assembly of 30S particles and may also be responsible for determining the conformation of the 16S rRNA at the A site. The chain is Small ribosomal subunit protein uS14 from Agrobacterium fabrum (strain C58 / ATCC 33970) (Agrobacterium tumefaciens (strain C58)).